We begin with the raw amino-acid sequence, 349 residues long: Ribosome production factor 1 (349 aa).

Disordered stretches follow at residues 1–58 (MAKA…SEIK) and 71–105 (KQQQ…PKTI). Residues 87-97 (KEREALGDKAP) show a composition bias toward basic and acidic residues. The Brix domain occupies 142–325 (PKILITTSDR…LRSLQKGTFD (184 aa)). Residues 303–320 (VGIQELGPRFTLKLRSLQ) form an RNA-binding region.

It localises to the nucleus. The protein resides in the nucleolus. In terms of biological role, may be required for ribosome biogenesis. The sequence is that of Ribosome production factor 1 (Rpf1) from Mus musculus (Mouse).